Consider the following 100-residue polypeptide: MKTYQEFIAEARVGAGKLEAAVNKKAHSFHDLPDKDRKKLVSLYIDRERILALPGANEGKQAKPLNAVEKKIDNFASKFGMSMDDLQQAAIEAAKAIKDK.

Residues 1–10 (MKTYQEFIAE) constitute a propeptide that is removed on maturation.

Internal protein II, which has a histone-like character, binds weakly to other components of the assembly core during an early stage of bacteriophage head morphogenesis. The chain is Internal protein II (ipi2) from Enterobacteria phage T4 (Bacteriophage T4).